Here is a 590-residue protein sequence, read N- to C-terminus: (+)-sabinene synthase, chloroplastic (590 aa).

The N-terminal 51 residues, 1-51, are a transit peptide targeting the chloroplast; the sequence is MSSISINIAMPLNSLHNFERKPSKAWSTSCTAPAARLRASSSLQQEKPHQI. The Mg(2+) site is built by Asp343, Asp347, Asp487, Thr491, and Glu495. A DDXXD motif motif is present at residues 343-347; the sequence is DDVYD.

This sequence belongs to the terpene synthase family. As to quaternary structure, monomer. Mg(2+) is required as a cofactor.

It localises to the plastid. The protein resides in the chloroplast. It catalyses the reaction (2E)-geranyl diphosphate = (1R,5R)-sabinene + diphosphate. It participates in terpene metabolism; sabinene hydrate biosynthesis. Catalyzes the formation of the (-)-3-isothujone precursor sabinene from geranyl diphosphate. The enzyme also produces significant amounts of gamma-terpinene, terpinolene and limonene. The chain is (+)-sabinene synthase, chloroplastic from Salvia officinalis (Sage).